The primary structure comprises 166 residues: Ribonuclease H2 subunit C (166 aa).

Position 1 is an N-acetylmethionine (methionine 1).

It belongs to the RNase H2 subunit C family. In terms of assembly, the RNase H2 complex is a heterotrimer composed of the catalytic subunit RNASEH2A and the non-catalytic subunits RNASEH2B and RNASEH2C.

Its subcellular location is the nucleus. Functionally, non catalytic subunit of RNase H2, an endonuclease that specifically degrades the RNA of RNA:DNA hybrids. Participates in DNA replication, possibly by mediating the removal of lagging-strand Okazaki fragment RNA primers during DNA replication. Mediates the excision of single ribonucleotides from DNA:RNA duplexes. This is Ribonuclease H2 subunit C (Rnaseh2c) from Mus musculus (Mouse).